Reading from the N-terminus, the 596-residue chain is Aspartate--tRNA(Asp/Asn) ligase (596 aa).

Position 175 (E175) interacts with L-aspartate. Residues 199–202 (QQYK) are aspartate. 2 residues coordinate L-aspartate: R221 and H454. 221-223 (RDE) contacts ATP. E488 lines the ATP pocket. R495 is an L-aspartate binding site. 540–543 (GIDR) lines the ATP pocket.

It belongs to the class-II aminoacyl-tRNA synthetase family. Type 1 subfamily. As to quaternary structure, homodimer.

It localises to the cytoplasm. It catalyses the reaction tRNA(Asx) + L-aspartate + ATP = L-aspartyl-tRNA(Asx) + AMP + diphosphate. Aspartyl-tRNA synthetase with relaxed tRNA specificity since it is able to aspartylate not only its cognate tRNA(Asp) but also tRNA(Asn). Reaction proceeds in two steps: L-aspartate is first activated by ATP to form Asp-AMP and then transferred to the acceptor end of tRNA(Asp/Asn). In Rhizobium rhizogenes (strain K84 / ATCC BAA-868) (Agrobacterium radiobacter), this protein is Aspartate--tRNA(Asp/Asn) ligase.